A 211-amino-acid polypeptide reads, in one-letter code: Small ribosomal subunit protein eS1 (211 aa).

The tract at residues 192-211 (NGLPPYEAVGDRATPELASY) is disordered.

The protein belongs to the eukaryotic ribosomal protein eS1 family.

This Methanopyrus kandleri (strain AV19 / DSM 6324 / JCM 9639 / NBRC 100938) protein is Small ribosomal subunit protein eS1.